The sequence spans 715 residues: Phosphoribosylformylglycinamidine synthase subunit PurL (715 aa).

Residue His-33 is part of the active site. An ATP-binding site is contributed by Tyr-36. Glu-77 provides a ligand contact to Mg(2+). Residues 78-81 and Arg-100 each bind substrate; that span reads SHNH. Residue His-79 is the Proton acceptor of the active site. Residue Asp-101 participates in Mg(2+) binding. Gln-225 provides a ligand contact to substrate. Asp-253 provides a ligand contact to Mg(2+). A substrate-binding site is contributed by 297-299; sequence ESQ. Residues Asn-476 and Gly-513 each coordinate ATP. Mg(2+) is bound at residue Asn-514. Residue Ser-516 coordinates substrate.

The protein belongs to the FGAMS family. In terms of assembly, monomer. Part of the FGAM synthase complex composed of 1 PurL, 1 PurQ and 2 PurS subunits.

It is found in the cytoplasm. The catalysed reaction is N(2)-formyl-N(1)-(5-phospho-beta-D-ribosyl)glycinamide + L-glutamine + ATP + H2O = 2-formamido-N(1)-(5-O-phospho-beta-D-ribosyl)acetamidine + L-glutamate + ADP + phosphate + H(+). Its pathway is purine metabolism; IMP biosynthesis via de novo pathway; 5-amino-1-(5-phospho-D-ribosyl)imidazole from N(2)-formyl-N(1)-(5-phospho-D-ribosyl)glycinamide: step 1/2. Its function is as follows. Part of the phosphoribosylformylglycinamidine synthase complex involved in the purines biosynthetic pathway. Catalyzes the ATP-dependent conversion of formylglycinamide ribonucleotide (FGAR) and glutamine to yield formylglycinamidine ribonucleotide (FGAM) and glutamate. The FGAM synthase complex is composed of three subunits. PurQ produces an ammonia molecule by converting glutamine to glutamate. PurL transfers the ammonia molecule to FGAR to form FGAM in an ATP-dependent manner. PurS interacts with PurQ and PurL and is thought to assist in the transfer of the ammonia molecule from PurQ to PurL. This Methanosarcina barkeri (strain Fusaro / DSM 804) protein is Phosphoribosylformylglycinamidine synthase subunit PurL.